The chain runs to 331 residues: DNA-directed RNA polymerase subunit alpha (331 aa).

Residues 1-233 are alpha N-terminal domain (alpha-NTD); it reads MVREKVTVST…DLFIPFLHAE (233 aa). An alpha C-terminal domain (alpha-CTD) region spans residues 265-331; it reads KEIELKYIFI…GILEKHFTID (67 aa).

Belongs to the RNA polymerase alpha chain family. As to quaternary structure, in plastids the minimal PEP RNA polymerase catalytic core is composed of four subunits: alpha, beta, beta', and beta''. When a (nuclear-encoded) sigma factor is associated with the core the holoenzyme is formed, which can initiate transcription.

Its subcellular location is the plastid. It is found in the chloroplast. It catalyses the reaction RNA(n) + a ribonucleoside 5'-triphosphate = RNA(n+1) + diphosphate. Functionally, DNA-dependent RNA polymerase catalyzes the transcription of DNA into RNA using the four ribonucleoside triphosphates as substrates. This is DNA-directed RNA polymerase subunit alpha from Vitis vinifera (Grape).